The sequence spans 695 residues: Elongation factor G (695 aa).

The region spanning 8-282 (EKTRNIGIMA…AVLDYLPAPT (275 aa)) is the tr-type G domain. GTP contacts are provided by residues 17–24 (AHIDAGKT), 81–85 (DTPGH), and 135–138 (NKMD).

It belongs to the TRAFAC class translation factor GTPase superfamily. Classic translation factor GTPase family. EF-G/EF-2 subfamily.

Its subcellular location is the cytoplasm. Its function is as follows. Catalyzes the GTP-dependent ribosomal translocation step during translation elongation. During this step, the ribosome changes from the pre-translocational (PRE) to the post-translocational (POST) state as the newly formed A-site-bound peptidyl-tRNA and P-site-bound deacylated tRNA move to the P and E sites, respectively. Catalyzes the coordinated movement of the two tRNA molecules, the mRNA and conformational changes in the ribosome. The chain is Elongation factor G from Listeria innocua serovar 6a (strain ATCC BAA-680 / CLIP 11262).